A 51-amino-acid polypeptide reads, in one-letter code: Large ribosomal subunit protein eL39x (51 aa).

It belongs to the eukaryotic ribosomal protein eL39 family.

The sequence is that of Large ribosomal subunit protein eL39x (RPL39C) from Oryza sativa subsp. japonica (Rice).